Consider the following 840-residue polypeptide: Heat shock 70 kDa protein 4 (840 aa).

N6-acetyllysine is present on Lys-53. A Phosphoserine modification is found at Ser-76. Residues Tyr-89 and Tyr-336 each carry the phosphotyrosine modification. Phosphoserine occurs at positions 393 and 415. Lys-430 carries the N6-acetyllysine modification. Residues 500–575 are disordered; that stretch reads VHKSEENEEP…QAKKAKVKTS (76 aa). The span at 514–533 shows a compositional bias: basic and acidic residues; that stretch reads QNAKEEEKMQVDQEEPHVEE. Position 538 is a phosphothreonine (Thr-538). A phosphoserine mark is found at Ser-546 and Ser-647. A Phosphotyrosine modification is found at Tyr-660. Lys-679 is modified (N6-acetyllysine). Position 756 is a phosphoserine (Ser-756). N6-methyllysine is present on Lys-773. Residues 783–840 form a disordered region; it reads ISKPKPKVEPPKEEQKNAEQNGPVDGQGDNPGPQAAEQGTDAAVPSDSDKKLPEMDID. Composition is skewed to basic and acidic residues over residues 788 to 799 and 829 to 840; these read PKVEPPKEEQKN and DSDKKLPEMDID.

This sequence belongs to the heat shock protein 70 family. In terms of assembly, interacts with TJP1/ZO-1.

The protein resides in the cytoplasm. This is Heat shock 70 kDa protein 4 (HSPA4) from Pongo abelii (Sumatran orangutan).